The primary structure comprises 50 residues: Large ribosomal subunit protein eL39 (50 aa).

Belongs to the eukaryotic ribosomal protein eL39 family.

The polypeptide is Large ribosomal subunit protein eL39 (rpl39e) (Archaeoglobus fulgidus (strain ATCC 49558 / DSM 4304 / JCM 9628 / NBRC 100126 / VC-16)).